The sequence spans 176 residues: Nascent polypeptide-associated complex subunit alpha (176 aa).

Residues 16 to 80 (PKNEKKAREL…AKVDDMNQRI (65 aa)) enclose the NAC-A/B domain. The segment at 83–110 (AQAAQAAETDAHAGHTHSHGEEDKSPEA) is disordered. A compositionally biased stretch (basic and acidic residues) spans 91–110 (TDAHAGHTHSHGEEDKSPEA). The 38-residue stretch at 138–175 (LDAKDIDIIVEQTQVSRAKAVKALRKHDGDMVNAIMEL) folds into the UBA domain.

This sequence belongs to the NAC-alpha family. Part of the nascent polypeptide-associated complex (NAC), consisting of EGD2 and EGD1. NAC associates with ribosomes via EGD1.

It is found in the cytoplasm. The protein localises to the nucleus. Component of the nascent polypeptide-associated complex (NAC), a dynamic component of the ribosomal exit tunnel, protecting the emerging polypeptides from interaction with other cytoplasmic proteins to ensure appropriate nascent protein targeting. The NAC complex also promotes mitochondrial protein import by enhancing productive ribosome interactions with the outer mitochondrial membrane and blocks the inappropriate interaction of ribosomes translating non-secretory nascent polypeptides with translocation sites in the membrane of the endoplasmic reticulum. EGD2 may also be involved in transcription regulation. The protein is Nascent polypeptide-associated complex subunit alpha (EGD2) of Scheffersomyces stipitis (strain ATCC 58785 / CBS 6054 / NBRC 10063 / NRRL Y-11545) (Yeast).